Here is a 126-residue protein sequence, read N- to C-terminus: Holo-[acyl-carrier-protein] synthase (126 aa).

The Mg(2+) site is built by aspartate 9 and glutamate 58.

It belongs to the P-Pant transferase superfamily. AcpS family. It depends on Mg(2+) as a cofactor.

It is found in the cytoplasm. The catalysed reaction is apo-[ACP] + CoA = holo-[ACP] + adenosine 3',5'-bisphosphate + H(+). Functionally, transfers the 4'-phosphopantetheine moiety from coenzyme A to a Ser of acyl-carrier-protein. The chain is Holo-[acyl-carrier-protein] synthase from Aliivibrio salmonicida (strain LFI1238) (Vibrio salmonicida (strain LFI1238)).